We begin with the raw amino-acid sequence, 205 residues long: MTNIVWHQHPVDQAARAEQKGQNPVLLWFTGLSGAGKSTLAGALERALFEAGFHTYLLDGDNVRHGLCKDLGFTVEDRDENLRRVGEVAKLMVDAGLVVLSAFISPTREERDSIRARFPVSQFIEVHVSTPLSVCEQRDPKGLYVKARSGEISNFTGISSPYEAPLAAELTIDTSKGDLVTQVRALIDYLTAINVINADKAKALA.

Residue 31–38 (GLSGAGKS) participates in ATP binding. The active-site Phosphoserine intermediate is the Ser-105.

The protein belongs to the APS kinase family.

The catalysed reaction is adenosine 5'-phosphosulfate + ATP = 3'-phosphoadenylyl sulfate + ADP + H(+). The protein operates within sulfur metabolism; hydrogen sulfide biosynthesis; sulfite from sulfate: step 2/3. Catalyzes the synthesis of activated sulfate. The chain is Adenylyl-sulfate kinase from Shewanella baltica (strain OS195).